Here is a 122-residue protein sequence, read N- to C-terminus: Large ribosomal subunit protein uL14 (122 aa).

It belongs to the universal ribosomal protein uL14 family. As to quaternary structure, part of the 50S ribosomal subunit. Forms a cluster with proteins L3 and L19. In the 70S ribosome, L14 and L19 interact and together make contacts with the 16S rRNA in bridges B5 and B8.

Functionally, binds to 23S rRNA. Forms part of two intersubunit bridges in the 70S ribosome. This Caulobacter sp. (strain K31) protein is Large ribosomal subunit protein uL14.